We begin with the raw amino-acid sequence, 188 residues long: Putative manganese efflux pump MntP (188 aa).

6 consecutive transmembrane segments (helical) span residues 3 to 23 (FYALLLIALGMSMDAFAVALA), 35 to 55 (IAATALVFGTVEALTPLAGWV), 63 to 83 (FISEWDHWVAFVLLGGLGLKM), 104 to 126 (WMTVLTAFGTSIDSMIVGVGLAF), 140 to 160 (MATTVMVAVGLTAGRALGVLF), and 167 to 187 (AGGLVLIAIGTWTLLSHLGLI).

The protein belongs to the MntP (TC 9.B.29) family.

The protein localises to the cell inner membrane. Its function is as follows. Probably functions as a manganese efflux pump. This is Putative manganese efflux pump MntP from Neisseria meningitidis serogroup B (strain ATCC BAA-335 / MC58).